Here is a 263-residue protein sequence, read N- to C-terminus: Putative inactive caspase B (263 aa).

A propeptide spans 1–8 (MMCEDASD) (removed in mature form by cps-1 or ced-3).

The protein belongs to the peptidase C14A family. In terms of assembly, interacts with ced-3 (via large subunit p17 or small subunit p13); the interaction inhibits ced-3 autoactivation. In terms of processing, cleavage by csp-1 isoform b or ced-3 removes the propeptide and generates subunit p31 in vitro. An additional cleavage at Asp-149 generates the 2 subunits p17 and p14 but this cleavage appears to be less efficient. As to expression, specifically expressed in the hermaphrodite germline.

It localises to the cytoplasm. Functionally, putative inactive caspase. In the germline, binds caspase ced-3 zymogen and prevents ced-3 autoactivation. Does not affect the caspase activity of mature ced-3 and ced-4-mediated mature ced-3 activation. Negatively regulates germline apoptosis by inhibiting autocleavage of caspase ced-3. Involved in fertility. In terms of biological role, putative inactive caspase. Dispensable for the inhibition of germline apoptosis. This Caenorhabditis elegans protein is Putative inactive caspase B.